The following is a 216-amino-acid chain: Putative germin-like protein 2-1 (216 aa).

The first 21 residues, 1–21 (MASTWFFLLALLAVSISNAFA), serve as a signal peptide directing secretion. A disulfide bridge connects residues Cys31 and Cys46. One can recognise a Cupin type-1 domain in the interval 60 to 210 (SGLHMAGNTS…AFQVEKKIVD (151 aa)). An N-linked (GlcNAc...) asparagine glycan is attached at Asn67. His108, His110, Glu115, and His156 together coordinate Mn(2+).

This sequence belongs to the germin family. In terms of assembly, oligomer (believed to be a pentamer but probably hexamer).

The protein resides in the secreted. It is found in the extracellular space. Its subcellular location is the apoplast. In terms of biological role, may play a role in plant defense. Probably has no oxalate oxidase activity even if the active site is conserved. This is Putative germin-like protein 2-1 from Oryza sativa subsp. japonica (Rice).